We begin with the raw amino-acid sequence, 489 residues long: Glucose-6-phosphate 1-dehydrogenase (489 aa).

NADP(+) contacts are provided by residues 15–22, R49, 86–87, and K149; these read GATGDLAK and DV. Substrate-binding residues include H179, K183, E217, and D236. H241 serves as the catalytic Proton acceptor. Residues K341 and K346 each contribute to the substrate site.

The protein belongs to the glucose-6-phosphate dehydrogenase family.

The enzyme catalyses D-glucose 6-phosphate + NADP(+) = 6-phospho-D-glucono-1,5-lactone + NADPH + H(+). It participates in carbohydrate degradation; pentose phosphate pathway; D-ribulose 5-phosphate from D-glucose 6-phosphate (oxidative stage): step 1/3. Functionally, catalyzes the oxidation of glucose 6-phosphate to 6-phosphogluconolactone. The chain is Glucose-6-phosphate 1-dehydrogenase from Bacillus subtilis (strain 168).